A 130-amino-acid polypeptide reads, in one-letter code: Small ribosomal subunit protein uS9 (130 aa).

The tract at residues 108–130 (PRMKERRKYGLKKARRAPQFSKR) is disordered. Residues 111–130 (KERRKYGLKKARRAPQFSKR) show a composition bias toward basic residues.

It belongs to the universal ribosomal protein uS9 family.

This Desulforamulus reducens (strain ATCC BAA-1160 / DSM 100696 / MI-1) (Desulfotomaculum reducens) protein is Small ribosomal subunit protein uS9.